Consider the following 848-residue polypeptide: Adenylate cyclase (848 aa).

Residues 1-535 (MYLYIETLKQ…DISHHFPLRL (535 aa)) are catalytic. Residues 541-848 (KALYSPCEIR…SQPAQQFQLH (308 aa)) form a regulatory region.

It belongs to the adenylyl cyclase class-1 family.

The protein localises to the cytoplasm. It catalyses the reaction ATP = 3',5'-cyclic AMP + diphosphate. The regulatory domain is involved in the regulation of cyclase activity by the carbon source. This is Adenylate cyclase (cya) from Yersinia intermedia.